The following is a 30-amino-acid chain: ARICPRILMKCKKDSDCLAECICEEHGFCG.

Disulfide bonds link Cys4-Cys21, Cys11-Cys23, and Cys17-Cys29.

Belongs to the protease inhibitor I7 (squash-type serine protease inhibitor) family.

Its subcellular location is the secreted. Functionally, strongly inhibits trypsin, weakly inhibits chymotrypsin. In Cyclanthera pedata (Achocha), this protein is Trypsin inhibitor 6.